Here is a 425-residue protein sequence, read N- to C-terminus: MESNCGHPMLSVSSAMYTFLLGAIFITLSSSRILLVKYSANEENKYDYLPTTVNVCSELVKLVFCALVSFWVLKKEDHQNRKLRCGSWKEFFNFMKWSIPAFLYFLDNLIVFYVLSYLQPAMAVIFSNFSIITTALLFRIVLKRHLNGIQWASLLILFLSIVALTSGTETSQHSLAGHGFHHDALFSPSNSCLLFRSECPRKDNCTAKEWTFSEAQWNTTARVFSHIRLGLGHVLIIVQCFISSMANIYNEKILKEGNQLTESIFVQNSKLYFFGVLFNGLTLGLQSGNRDQIKNCGIFYGHNAFSVALIFVTAFQGLSVAFILKFLDNMFHVLMAQVTTVVITTVSVLVFDFRPSLEFFLEAPSVLLSILIYNASNPQGVENVPRKERIRDLSGTLWERSSGDGEELERLTKPKSDIESDEDTF.

Residues 1 to 7 lie on the Cytoplasmic side of the membrane; it reads MESNCGH. Residues 8–28 traverse the membrane as a helical segment; that stretch reads PMLSVSSAMYTFLLGAIFITL. The Lumenal portion of the chain corresponds to 29-52; that stretch reads SSSRILLVKYSANEENKYDYLPTT. Residues 53 to 73 form a helical membrane-spanning segment; that stretch reads VNVCSELVKLVFCALVSFWVL. At 74–92 the chain is on the cytoplasmic side; that stretch reads KKEDHQNRKLRCGSWKEFF. Residues 93–115 form a helical membrane-spanning segment; the sequence is NFMKWSIPAFLYFLDNLIVFYVL. The Lumenal segment spans residues 116-119; the sequence is SYLQ. Residues 120–142 form a helical membrane-spanning segment; the sequence is PAMAVIFSNFSIITTALLFRIVL. The Cytoplasmic segment spans residues 143 to 147; it reads KRHLN. Residues 148-168 traverse the membrane as a helical segment; that stretch reads GIQWASLLILFLSIVALTSGT. Residues 169-228 lie on the Lumenal side of the membrane; that stretch reads ETSQHSLAGHGFHHDALFSPSNSCLLFRSECPRKDNCTAKEWTFSEAQWNTTARVFSHIR. Residues Asn204 and Asn218 are each glycosylated (N-linked (GlcNAc...) asparagine). A helical membrane pass occupies residues 229–249; it reads LGLGHVLIIVQCFISSMANIY. The Cytoplasmic portion of the chain corresponds to 250 to 263; sequence NEKILKEGNQLTES. A helical membrane pass occupies residues 264–284; it reads IFVQNSKLYFFGVLFNGLTLG. The Lumenal portion of the chain corresponds to 285 to 303; the sequence is LQSGNRDQIKNCGIFYGHN. Residues 304–324 traverse the membrane as a helical segment; sequence AFSVALIFVTAFQGLSVAFIL. Over 325-330 the chain is Cytoplasmic; the sequence is KFLDNM. A helical membrane pass occupies residues 331–351; the sequence is FHVLMAQVTTVVITTVSVLVF. Over 352–354 the chain is Lumenal; that stretch reads DFR. A helical membrane pass occupies residues 355–375; it reads PSLEFFLEAPSVLLSILIYNA. Residues 376 to 425 lie on the Cytoplasmic side of the membrane; it reads SNPQGVENVPRKERIRDLSGTLWERSSGDGEELERLTKPKSDIESDEDTF. Residues Ser394, Ser416, and Ser420 each carry the phosphoserine modification. The interval 398–425 is disordered; it reads WERSSGDGEELERLTKPKSDIESDEDTF. A compositionally biased stretch (basic and acidic residues) spans 408–418; that stretch reads LERLTKPKSDI.

Belongs to the nucleotide-sugar transporter family. SLC35A subfamily. As to quaternary structure, probably forms homooligomers and heterooligomers with SLC35A1, SLC35A2, SLC35A3 and SLC35A4.

It is found in the golgi apparatus membrane. It catalyses the reaction UMP(out) + UDP-alpha-D-glucuronate(in) = UMP(in) + UDP-alpha-D-glucuronate(out). It carries out the reaction UMP(out) + UDP-N-acetyl-alpha-D-glucosamine(in) = UMP(in) + UDP-N-acetyl-alpha-D-glucosamine(out). The catalysed reaction is UDP-N-acetyl-alpha-D-galactosamine(in) + UMP(out) = UDP-N-acetyl-alpha-D-galactosamine(out) + UMP(in). In terms of biological role, probable UDP-sugar:UMP transmembrane antiporter involved in UDP-alpha-D-glucuronate/UDP-GlcA, UDP-GlcNAc/UDP-N-acetyl-alpha-D-glucosamine and UDP-N-acetyl-alpha-D-galactosamine/UDP-GalNAc transport from the cytosol to the lumen of the Golgi. This chain is UDP-sugar transporter protein SLC35A5, found in Bos taurus (Bovine).